We begin with the raw amino-acid sequence, 323 residues long: DNA-directed RNA polymerase subunit alpha (323 aa).

Residues 1–225 form an alpha N-terminal domain (alpha-NTD) region; it reads MLDIAMPKIE…QYSQTIADFN (225 aa). Residues 243–323 form an alpha C-terminal domain (alpha-CTD) region; that stretch reads PADIYDTPIE…TNSSPAGIES (81 aa).

It belongs to the RNA polymerase alpha chain family. Homodimer. The RNAP catalytic core consists of 2 alpha, 1 beta, 1 beta' and 1 omega subunit. When a sigma factor is associated with the core the holoenzyme is formed, which can initiate transcription.

The enzyme catalyses RNA(n) + a ribonucleoside 5'-triphosphate = RNA(n+1) + diphosphate. In terms of biological role, DNA-dependent RNA polymerase catalyzes the transcription of DNA into RNA using the four ribonucleoside triphosphates as substrates. The sequence is that of DNA-directed RNA polymerase subunit alpha from Roseiflexus castenholzii (strain DSM 13941 / HLO8).